Reading from the N-terminus, the 551-residue chain is Glucans biosynthesis protein D (551 aa).

The segment at residues methionine 1–alanine 32 is a signal peptide (tat-type signal).

It belongs to the OpgD/OpgG family. In terms of processing, predicted to be exported by the Tat system. The position of the signal peptide cleavage has not been experimentally proven.

The protein resides in the periplasm. Its pathway is glycan metabolism; osmoregulated periplasmic glucan (OPG) biosynthesis. Its function is as follows. Probably involved in the control of the structural glucose backbone of osmoregulated periplasmic glucans (OPGs). This chain is Glucans biosynthesis protein D, found in Escherichia coli (strain K12 / MC4100 / BW2952).